A 320-amino-acid chain; its full sequence is Cytochrome f (320 aa).

The first 32 residues, 1–32 (MKTKKSYDKVTRWVTPPILMLIIIHIITGACS), serve as a signal peptide directing secretion. Heme contacts are provided by Tyr-36, Cys-56, Cys-59, and His-60. A helical membrane pass occupies residues 286–306 (IQGLLGFLASVVLAQIFLVLK).

This sequence belongs to the cytochrome f family. As to quaternary structure, the 4 large subunits of the cytochrome b6-f complex are cytochrome b6, subunit IV (17 kDa polypeptide, petD), cytochrome f and the Rieske protein, while the 4 small subunits are PetG, PetL, PetM and PetN. The complex functions as a dimer. Heme serves as cofactor.

The protein resides in the plastid. The protein localises to the chloroplast thylakoid membrane. Functionally, component of the cytochrome b6-f complex, which mediates electron transfer between photosystem II (PSII) and photosystem I (PSI), cyclic electron flow around PSI, and state transitions. The sequence is that of Cytochrome f from Gnetum parvifolium (Small-leaved jointfir).